We begin with the raw amino-acid sequence, 75 residues long: Accessory gland-specific peptide 57Da (75 aa).

The first 19 residues, 1–19 (MKFLALFVTLLVVLALVSA), serve as a signal peptide directing secretion. The interval 55 to 75 (AAPAAAPAAPEAGLADAPAES) is disordered. Over residues 56-75 (APAAAPAAPEAGLADAPAES) the composition is skewed to low complexity.

Lumen fluid of male accessory glands, becomes seminal fluid.

The protein resides in the secreted. Its function is as follows. Transferred from male to female during mating and may affect egglaying and behavior after mating. The sequence is that of Accessory gland-specific peptide 57Da (Mst57Da) from Drosophila melanogaster (Fruit fly).